The sequence spans 329 residues: Flotillin-like protein FloA (329 aa).

The next 2 helical transmembrane spans lie at 4–24 (IGFI…FSFV) and 26–46 (VGLW…TLVG).

This sequence belongs to the flotillin-like FloA family. Homooligomerizes.

Its subcellular location is the cell membrane. The protein localises to the membrane raft. Found in functional membrane microdomains (FMM) that may be equivalent to eukaryotic membrane rafts. FMMs are highly dynamic and increase in number as cells age. Flotillins are thought to be important factors in membrane fluidity. In Staphylococcus epidermidis (strain ATCC 35984 / DSM 28319 / BCRC 17069 / CCUG 31568 / BM 3577 / RP62A), this protein is Flotillin-like protein FloA.